Here is a 957-residue protein sequence, read N- to C-terminus: Glycine dehydrogenase (decarboxylating) (957 aa).

Lys702 carries the N6-(pyridoxal phosphate)lysine modification.

This sequence belongs to the GcvP family. The glycine cleavage system is composed of four proteins: P, T, L and H. The cofactor is pyridoxal 5'-phosphate.

The catalysed reaction is N(6)-[(R)-lipoyl]-L-lysyl-[glycine-cleavage complex H protein] + glycine + H(+) = N(6)-[(R)-S(8)-aminomethyldihydrolipoyl]-L-lysyl-[glycine-cleavage complex H protein] + CO2. In terms of biological role, the glycine cleavage system catalyzes the degradation of glycine. The P protein binds the alpha-amino group of glycine through its pyridoxal phosphate cofactor; CO(2) is released and the remaining methylamine moiety is then transferred to the lipoamide cofactor of the H protein. The sequence is that of Glycine dehydrogenase (decarboxylating) from Bradyrhizobium sp. (strain ORS 278).